A 370-amino-acid chain; its full sequence is Platelet-derived growth factor D (370 aa).

The signal sequence occupies residues 1–23 (MQRLVLVSILLCANFSCYPDTFA). The region spanning 52–170 (REENIQVTSN…PGFKIYYSFV (119 aa)) is the CUB domain. A disulfide bridge connects residues Cys-109 and Cys-131. Asn-276 carries an N-linked (GlcNAc...) asparagine glycan. Intrachain disulfides connect Cys-302/Cys-360 and Cys-306/Cys-362.

This sequence belongs to the PDGF/VEGF growth factor family. Homodimer; disulfide-linked. Interacts with PDGFRB homodimers, and with heterodimers formed by PDGFRA and PDGFRB. Post-translationally, activated by proteolytic cleavage. Proteolytic removal of the N-terminal CUB domain releasing the core domain is necessary for unmasking the receptor-binding epitopes of the core domain. Cleavage after Arg-247 or Arg-249 by urokinase plasminogen activator gives rise to the active form. As to expression, expressed at high levels in developing heart, lung, kidney and some muscle derivatives. Moderately expressed in liver, brain and testis. In the kidney, localized to glomerular mesangial cells and vascular smooth muscle cells. Up-regulated in areas of renal fibrosis. In mice with unilateral ureteral obstruction, expressed in interstitial cells at day 4, with an increased to maximal expression at day 14.

It is found in the secreted. Functionally, growth factor that plays an essential role in the regulation of embryonic development, cell proliferation, cell migration, survival and chemotaxis. Potent mitogen for cells of mesenchymal origin. Plays an important role in wound healing. Has oncogenic potential and can induce tumor formation. Induces macrophage recruitment, increased interstitial pressure, and blood vessel maturation during angiogenesis. Can initiate events that lead to a mesangial proliferative glomerulonephritis, including influx of monocytes and macrophages and production of extracellular matrix. This is Platelet-derived growth factor D (Pdgfd) from Mus musculus (Mouse).